An 81-amino-acid polypeptide reads, in one-letter code: Sulfur carrier protein TusA (81 aa).

Cys20 (cysteine persulfide intermediate) is an active-site residue.

It belongs to the sulfur carrier protein TusA family.

It is found in the cytoplasm. In terms of biological role, sulfur carrier protein which probably makes part of a sulfur-relay system. The polypeptide is Sulfur carrier protein TusA (Colwellia psychrerythraea (strain 34H / ATCC BAA-681) (Vibrio psychroerythus)).